The chain runs to 281 residues: Large ribosomal subunit protein uL2 (281 aa).

The disordered stretch occupies residues 222–281; sequence TVRGSAMNPNDHPHGGGEGRQPIGRKSPMTPWGKRALGVKTRATKKASNQFIIRRRKETK.

This sequence belongs to the universal ribosomal protein uL2 family. In terms of assembly, part of the 50S ribosomal subunit. Forms a bridge to the 30S subunit in the 70S ribosome.

Functionally, one of the primary rRNA binding proteins. Required for association of the 30S and 50S subunits to form the 70S ribosome, for tRNA binding and peptide bond formation. It has been suggested to have peptidyltransferase activity; this is somewhat controversial. Makes several contacts with the 16S rRNA in the 70S ribosome. The chain is Large ribosomal subunit protein uL2 from Metamycoplasma hominis (strain ATCC 23114 / DSM 25592 / NBRC 14850 / NCTC 10111 / PG21) (Mycoplasma hominis).